Here is a 317-residue protein sequence, read N- to C-terminus: tRNA dimethylallyltransferase (317 aa).

19 to 26 contributes to the ATP binding site; sequence GPTASGKS. 21-26 serves as a coordination point for substrate; that stretch reads TASGKS. The segment at 44–47 is interaction with substrate tRNA; sequence DSMQ.

It belongs to the IPP transferase family. In terms of assembly, monomer. It depends on Mg(2+) as a cofactor.

It carries out the reaction adenosine(37) in tRNA + dimethylallyl diphosphate = N(6)-dimethylallyladenosine(37) in tRNA + diphosphate. Its function is as follows. Catalyzes the transfer of a dimethylallyl group onto the adenine at position 37 in tRNAs that read codons beginning with uridine, leading to the formation of N6-(dimethylallyl)adenosine (i(6)A). This chain is tRNA dimethylallyltransferase, found in Methylorubrum extorquens (strain CM4 / NCIMB 13688) (Methylobacterium extorquens).